The chain runs to 116 residues: T cell receptor alpha variable 38-1 (116 aa).

The signal sequence occupies residues 1–21 (MTRVSLLWAVVVSTCLESGMA). Positions 22–116 (QTVTQSQPEM…TAMYFCAFMK (95 aa)) constitute an Ig-like domain. A disulfide bridge links Cys43 with Cys112. N-linked (GlcNAc...) asparagine glycosylation occurs at Asn78.

As to quaternary structure, alpha-beta TR is a heterodimer composed of an alpha and beta chain; disulfide-linked. The alpha-beta TR is associated with the transmembrane signaling CD3 coreceptor proteins to form the TR-CD3 (TcR or TCR). The assembly of alpha-beta TR heterodimers with CD3 occurs in the endoplasmic reticulum where a single alpha-beta TR heterodimer associates with one CD3D-CD3E heterodimer, one CD3G-CD3E heterodimer and one CD247 homodimer forming a stable octameric structure. CD3D-CD3E and CD3G-CD3E heterodimers preferentially associate with TR alpha and TR beta chains, respectively. The association of the CD247 homodimer is the last step of TcR assembly in the endoplasmic reticulum and is required for transport to the cell surface.

Its subcellular location is the cell membrane. V region of the variable domain of T cell receptor (TR) alpha chain that participates in the antigen recognition. Alpha-beta T cell receptors are antigen specific receptors which are essential to the immune response and are present on the cell surface of T lymphocytes. Recognize peptide-major histocompatibility (MH) (pMH) complexes that are displayed by antigen presenting cells (APC), a prerequisite for efficient T cell adaptive immunity against pathogens. Binding of alpha-beta TR to pMH complex initiates TR-CD3 clustering on the cell surface and intracellular activation of LCK that phosphorylates the ITAM motifs of CD3G, CD3D, CD3E and CD247 enabling the recruitment of ZAP70. In turn ZAP70 phosphorylates LAT, which recruits numerous signaling molecules to form the LAT signalosome. The LAT signalosome propagates signal branching to three major signaling pathways, the calcium, the mitogen-activated protein kinase (MAPK) kinase and the nuclear factor NF-kappa-B (NF-kB) pathways, leading to the mobilization of transcription factors that are critical for gene expression and essential for T cell growth and differentiation. The T cell repertoire is generated in the thymus, by V-(D)-J rearrangement. This repertoire is then shaped by intrathymic selection events to generate a peripheral T cell pool of self-MH restricted, non-autoaggressive T cells. Post-thymic interaction of alpha-beta TR with the pMH complexes shapes TR structural and functional avidity. The chain is T cell receptor alpha variable 38-1 from Homo sapiens (Human).